Here is a 93-residue protein sequence, read N- to C-terminus: Small ribosomal subunit protein uS19 (93 aa).

Belongs to the universal ribosomal protein uS19 family.

Protein S19 forms a complex with S13 that binds strongly to the 16S ribosomal RNA. This Anaplasma marginale (strain Florida) protein is Small ribosomal subunit protein uS19.